The primary structure comprises 465 residues: Tapasin (465 aa).

An N-terminal signal peptide occupies residues 1 to 23; that stretch reads MKPLLLLVAVALGLATVVSVVSA. The Lumenal portion of the chain corresponds to 24-416; it reads GPEAIECWFV…GFSGPSIEDG (393 aa). An intrachain disulfide couples cysteine 30 to cysteine 94. N-linked (GlcNAc...) asparagine glycosylation is present at asparagine 256. The region spanning 295 to 402 is the Ig-like C1-type domain; that stretch reads PRVSLTPAPV…PASGRSADVT (108 aa). Residues cysteine 318 and cysteine 385 are joined by a disulfide bond. A helical transmembrane segment spans residues 417–437; that stretch reads IGLFLSAFLLLGLLKVLGWLA. Residues 438-465 are Cytoplasmic-facing; the sequence is AYWTIPEVSKEKATAASLTIPRNSKKSQ.

Heterodimer with PDIA3; disulfide-linked. Obligatory mediator for the interaction between newly assembled MHC class I molecules, calreticulin, PDIA3 and TAP. Up to 4 MHC class I/tapasin complexes bind to 1 TAP. Interacts with HLA-G-B2M complex; this interaction is required for loading of high affinity peptides. On its own or as part of MHC class I peptide loading complex, interacts with ligand-free MR1 or MR1-B2M complex, providing for stable MR1 pools ready for metabolite antigen processing.

Its subcellular location is the endoplasmic reticulum membrane. Its function is as follows. Involved in the association of MHC class I with transporter associated with antigen processing (TAP) and in the assembly of MHC class I with peptide (peptide loading). This is Tapasin (Tapbp) from Mus musculus (Mouse).